Reading from the N-terminus, the 1251-residue chain is Myosin-1 (1251 aa).

The interval 1 to 37 (MGQSKRPFKNKEEKKSRGFGRSRHDDAGAGGRPQVKK) is disordered. Basic and acidic residues predominate over residues 9-27 (KNKEEKKSRGFGRSRHDDA). The region spanning 48–727 (IGVSDLTLLS…TLFALEHMRD (680 aa)) is the Myosin motor domain. An ATP-binding site is contributed by 141-148 (GESGAGKT). S369 carries the phosphoserine modification. The segment at 416–498 (TIGILDIYGF…PGVFAALNDA (83 aa)) is actin-binding. 2 consecutive IQ domains span residues 731–751 (HNMA…RTEC) and 752–777 (AIRI…QGHK). The TH1 domain maps to 785–980 (RRRYSLVGSR…PGEPANSVSK (196 aa)). Disordered regions lie at residues 958–1093 (RDDV…SNEL) and 1135–1227 (AKTP…ASIA). The segment covering 1040–1052 (VAQSVTAVAAAHA) has biased composition (low complexity). Pro residues predominate over residues 1061-1073 (RPPPPPPPTQPPA). One can recognise an SH3 domain in the interval 1074 to 1135 (PKKDTAKALY…PEAYLEPIVA (62 aa)). Residues 1139-1148 (SLPPPPPSLP) are compositionally biased toward pro residues. Composition is skewed to polar residues over residues 1150-1161 (QSKSAVSNTLPN) and 1216-1225 (ATPSSLSNAS).

The protein belongs to the TRAFAC class myosin-kinesin ATPase superfamily. Myosin family. Post-translationally, phosphorylation of the TEDS site (Ser-369) is required for the polarization of the actin cytoskeleton. Phosphorylation probably activates the myosin-I ATPase activity.

The protein resides in the cytoplasm. Its subcellular location is the cytoskeleton. It is found in the actin patch. Functionally, type-I myosin implicated in the organization of the actin cytoskeleton. Required for proper actin cytoskeleton polarization. At the cell cortex, assembles in patch-like structures together with proteins from the actin-polymerizing machinery and promotes actin assembly. Functions as actin nucleation-promoting factor (NPF) for the Arp2/3 complex. The protein is Myosin-1 (MYO1) of Coccidioides immitis (strain RS) (Valley fever fungus).